Consider the following 300-residue polypeptide: Acetylglutamate kinase (300 aa).

Residues 68–69 (GG), Arg90, and Asn195 each bind substrate.

This sequence belongs to the acetylglutamate kinase family. ArgB subfamily.

Its subcellular location is the cytoplasm. It carries out the reaction N-acetyl-L-glutamate + ATP = N-acetyl-L-glutamyl 5-phosphate + ADP. Its pathway is amino-acid biosynthesis; L-arginine biosynthesis; N(2)-acetyl-L-ornithine from L-glutamate: step 2/4. Catalyzes the ATP-dependent phosphorylation of N-acetyl-L-glutamate. The polypeptide is Acetylglutamate kinase (Halorhodospira halophila (strain DSM 244 / SL1) (Ectothiorhodospira halophila (strain DSM 244 / SL1))).